The chain runs to 344 residues: Small ribosomal subunit protein uS3 (344 aa).

Residues 38 to 106 enclose the KH type-2 domain; the sequence is LKAALRERLK…EVFIDIQEVH (69 aa). Positions 217-344 are disordered; that stretch reads PEPEPRREQR…QKPEGSGENQ (128 aa). Composition is skewed to basic and acidic residues over residues 219–259 and 335–344; these read PEPR…RGDR and QKPEGSGENQ.

This sequence belongs to the universal ribosomal protein uS3 family. As to quaternary structure, part of the 30S ribosomal subunit. Forms a tight complex with proteins S10 and S14.

In terms of biological role, binds the lower part of the 30S subunit head. Binds mRNA in the 70S ribosome, positioning it for translation. This chain is Small ribosomal subunit protein uS3, found in Solibacter usitatus (strain Ellin6076).